A 918-amino-acid chain; its full sequence is Hexokinase-1 (918 aa).

Met-1 is subject to N-acetylmethionine. The tract at residues 1–10 is mitochondrial-binding peptide (MBP); it reads MIAAQLLAYY. Hexokinase domains lie at 16 to 458 and 464 to 906; these read DDQV…MVTA and AEQH…LITA. Residues Arg-30 and 84–89 contribute to the ATP site; that span reads DLGGSS. The interval 73 to 207 is hexokinase small subdomain 1; it reads DGSEKGDFIA…DYDANIVAVV (135 aa). A D-glucose 6-phosphate-binding site is contributed by 84 to 88; the sequence is DLGGS. Residues Ser-155, 172–173, and 208–209 contribute to the D-glucose site; these read TK and ND. The segment at 208–447 is hexokinase large subdomain 1; sequence NDTVGTMMTC…SDVRFLLSES (240 aa). Residues Asp-209 and Thr-232 each contribute to the D-glucose 6-phosphate site. D-glucose-binding positions include Asn-235, Glu-260, and 291–294; that span reads QLFE. A Phosphoserine modification is found at Ser-337. 413–415 is a D-glucose 6-phosphate binding site; it reads DGS. Residue 425 to 426 coordinates ATP; sequence RR. D-glucose 6-phosphate contacts are provided by residues Thr-449, 532–536, and Ser-603; that span reads DLGGT. A hexokinase small subdomain 2 region spans residues 521-655; the sequence is DGTEHGDFLA…EFDLDVVAVV (135 aa). Residue 532 to 537 participates in ATP binding; the sequence is DLGGTN. D-glucose contacts are provided by residues 620 to 621 and 656 to 657; these read TK and ND. Residues 656–895 form a hexokinase large subdomain 2 region; that stretch reads NDTVGTMMTC…CTVSFLLSED (240 aa). Positions 657 and 680 each coordinate D-glucose 6-phosphate. ATP is bound at residue Thr-680. D-glucose-binding residues include Asn-683, Glu-708, and Glu-742. Residues 747–748, 784–788, and 863–867 contribute to the ATP site; these read GM, TKFLS, and TLYKL. D-glucose 6-phosphate contacts are provided by residues 861–863 and Ser-897; that span reads DGT.

This sequence belongs to the hexokinase family. Monomer. Interacts with RABL2/RABL2A; binds preferentially to GTP-bound RABL2. Interacts with VDAC1. The HK1-VDAC1 complex interacts with ATF2. Interacts (via N-terminal spermatogenic cell-specific region) with PFKM (via C-terminus). Interacts with SMAD5. In terms of tissue distribution, expressed in flagella of epididymal sperm.

Its subcellular location is the mitochondrion outer membrane. The protein resides in the cytoplasm. It is found in the cytosol. It carries out the reaction a D-hexose + ATP = a D-hexose 6-phosphate + ADP + H(+). The enzyme catalyses D-fructose + ATP = D-fructose 6-phosphate + ADP + H(+). It catalyses the reaction D-glucose + ATP = D-glucose 6-phosphate + ADP + H(+). The catalysed reaction is D-mannose + ATP = D-mannose 6-phosphate + ADP + H(+). It carries out the reaction D-glucosamine + ATP = D-glucosamine 6-phosphate + ADP + H(+). It functions in the pathway carbohydrate metabolism; hexose metabolism. It participates in carbohydrate degradation; glycolysis; D-glyceraldehyde 3-phosphate and glycerone phosphate from D-glucose: step 1/4. Hexokinase is an allosteric enzyme inhibited by its product D-glucose 6-phosphate. Hexokinase activity is inhibited by N-acetyl-D-glucosamine. Catalyzes the phosphorylation of various hexoses, such as D-glucose, D-glucosamine, D-fructose, D-mannose and 2-deoxy-D-glucose, to hexose 6-phosphate (D-glucose 6-phosphate, D-glucosamine 6-phosphate, D-fructose 6-phosphate, D-mannose 6-phosphate and 2-deoxy-D-glucose 6-phosphate, respectively). Mediates the initial step of glycolysis by catalyzing phosphorylation of D-glucose to D-glucose 6-phosphate. Involved in innate immunity and inflammation by acting as a pattern recognition receptor for bacterial peptidoglycan. When released in the cytosol, N-acetyl-D-glucosamine component of bacterial peptidoglycan inhibits the hexokinase activity of HK1 and causes its dissociation from mitochondrial outer membrane, thereby activating the NLRP3 inflammasome. In Rattus norvegicus (Rat), this protein is Hexokinase-1.